We begin with the raw amino-acid sequence, 561 residues long: Putative transport protein AHA_2450 (561 aa).

5 helical membrane passes run 8 to 28, 37 to 57, 66 to 86, 90 to 110, and 161 to 181; these read LLHQ…LLLG, IGNT…GFEF, FMLF…SVFL, IHYI…TVGL, and NMGI…MLVV. RCK C-terminal domains lie at 206-291 and 293-376; these read SDNE…NYRN and KEVF…KIGF. 5 helical membrane passes run 386–406, 409–429, 450–470, 476–496, and 541–561; these read LVAF…SLVF, LEFG…MGYL, LGLA…ILDH, AVVL…GYLF, and TYAV…GFWF.

This sequence belongs to the AAE transporter (TC 2.A.81) family. YbjL subfamily.

It localises to the cell membrane. In Aeromonas hydrophila subsp. hydrophila (strain ATCC 7966 / DSM 30187 / BCRC 13018 / CCUG 14551 / JCM 1027 / KCTC 2358 / NCIMB 9240 / NCTC 8049), this protein is Putative transport protein AHA_2450.